A 232-amino-acid chain; its full sequence is Golgi SNAP receptor complex member 1 (232 aa).

Topologically, residues 1-211 (MGGSSYDVLR…QRINIKKRRD (211 aa)) are cytoplasmic. Coiled-coil stretches lie at residues 6 to 23 (YDVL…IDLK) and 52 to 80 (GEHV…MSDL). The helical; Anchor for type IV membrane protein transmembrane segment at 212-232 (SLILGAVIGFCVILLLLYAFN) threads the bilayer.

It belongs to the GOSR1 family. In terms of assembly, component of several multiprotein Golgi SNARE complexes.

The protein resides in the golgi apparatus membrane. In terms of biological role, involved in transport from the ER to the Golgi apparatus as well as in intra-Golgi transport. It belongs to a super-family of proteins called t-SNAREs or soluble NSF (N-ethylmaleimide-sensitive factor) attachment protein receptor. This Drosophila melanogaster (Fruit fly) protein is Golgi SNAP receptor complex member 1 (Gos28).